The sequence spans 313 residues: tRNA-cytidine(32) 2-sulfurtransferase (313 aa).

The PP-loop motif signature appears at 47-52; it reads SGGKDS. Residues Cys122, Cys125, and Cys213 each coordinate [4Fe-4S] cluster.

This sequence belongs to the TtcA family. Homodimer. Requires Mg(2+) as cofactor. It depends on [4Fe-4S] cluster as a cofactor.

It localises to the cytoplasm. It catalyses the reaction cytidine(32) in tRNA + S-sulfanyl-L-cysteinyl-[cysteine desulfurase] + AH2 + ATP = 2-thiocytidine(32) in tRNA + L-cysteinyl-[cysteine desulfurase] + A + AMP + diphosphate + H(+). The protein operates within tRNA modification. Functionally, catalyzes the ATP-dependent 2-thiolation of cytidine in position 32 of tRNA, to form 2-thiocytidine (s(2)C32). The sulfur atoms are provided by the cysteine/cysteine desulfurase (IscS) system. The polypeptide is tRNA-cytidine(32) 2-sulfurtransferase (Yersinia enterocolitica serotype O:8 / biotype 1B (strain NCTC 13174 / 8081)).